The primary structure comprises 218 residues: Cytidylate kinase (218 aa).

Residue 11–19 (GPSGVGKST) participates in ATP binding.

The protein belongs to the cytidylate kinase family. Type 1 subfamily.

The protein localises to the cytoplasm. The enzyme catalyses CMP + ATP = CDP + ADP. The catalysed reaction is dCMP + ATP = dCDP + ADP. The sequence is that of Cytidylate kinase from Mycoplasmopsis synoviae (strain 53) (Mycoplasma synoviae).